Consider the following 210-residue polypeptide: Urease accessory protein UreF (210 aa).

This sequence belongs to the UreF family. In terms of assembly, ureD, UreF and UreG form a complex that acts as a GTP-hydrolysis-dependent molecular chaperone, activating the urease apoprotein by helping to assemble the nickel containing metallocenter of UreC. The UreE protein probably delivers the nickel.

The protein resides in the cytoplasm. Its function is as follows. Required for maturation of urease via the functional incorporation of the urease nickel metallocenter. The polypeptide is Urease accessory protein UreF (Dinoroseobacter shibae (strain DSM 16493 / NCIMB 14021 / DFL 12)).